We begin with the raw amino-acid sequence, 249 residues long: Eukaryotic translation initiation factor 3 subunit J-A (249 aa).

Over residues 1–15 (MADADSWDADSFEPE) the composition is skewed to acidic residues. The interval 1 to 104 (MADADSWDAD…DTPLTPEDEL (104 aa)) is disordered. Residues 16 to 27 (EPIKKAAVHDKW) show a composition bias toward basic and acidic residues. Over residues 28 to 52 (EGEDEDDDVKDNWDDDEEEEKEEEE) the composition is skewed to acidic residues. The stretch at 34–96 (DDVKDNWDDD…QQLEETKRDT (63 aa)) forms a coiled coil. Positions 53-96 (EKKTEAKPTEKKKLSEKIKEKENLQRKKQEELRKQQLEETKRDT) are enriched in basic and acidic residues.

The protein belongs to the eIF-3 subunit J family. In terms of assembly, component of the eukaryotic translation initiation factor 3 (eIF-3) complex, which is composed of 13 subunits: eif3a, eif3b, eif3c, eif3d, eif3e, eif3f, eif3g, eif3h, eif3i, eif3j, eif3k, eif3l and eif3m.

Its subcellular location is the cytoplasm. In terms of biological role, component of the eukaryotic translation initiation factor 3 (eIF-3) complex, which is involved in protein synthesis of a specialized repertoire of mRNAs and, together with other initiation factors, stimulates binding of mRNA and methionyl-tRNAi to the 40S ribosome. The eIF-3 complex specifically targets and initiates translation of a subset of mRNAs involved in cell proliferation. The protein is Eukaryotic translation initiation factor 3 subunit J-A (eif3ja) of Danio rerio (Zebrafish).